Reading from the N-terminus, the 497-residue chain is MAAATVNPLMSTLKSDSSLQVALHPLPILEISDYITRSYLRGYKGAIVGALIGQQNGRQITIEHSFSVKTEHTGQNYKVDSEWFTARLDQMKAVHKDRALDFVGWYTLVPKSGPTDAHLPIHSYFYSQNESAVLLGFHIHEILNPVAGDPLPLTIYESNLEIVDGTEASTVEVEGEDREMKDVTAEPSRSIKFRELPYTTETGEAEMIALEFVREGGSANVTTTATNITATEDEGSDKPLMKKVVDTNKGSKRRAVSSDDAAAEAPTTSSAAKGTATDKNRDANLTKAELDYMSALQAKYNAVQMMKKRLDTVISYLQRLPPDYLSSGDASSQQQQQQQQQQQTEGLDQPQYTVPSNKILRQIQALVTNVQLVMSNSTSGQGQGQGERDTDLGALEKELLKETNDVKLVELIADLMSSVKDMKEVGKKFHVVETAKNSKRREQASHGGGERFNPHHPYPGGGGGSSMMREHAGLVGEGSASGSGGSGPAGDLARFDH.

The MPN domain maps to 21 to 162 (VALHPLPILE…LTIYESNLEI (142 aa)). Disordered regions lie at residues 230–282 (ATED…KNRD), 324–350 (YLSSGDASSQQQQQQQQQQQTEGLDQP), and 435–497 (AKNS…RFDH). The segment covering 236–246 (SDKPLMKKVVD) has biased composition (basic and acidic residues). 2 stretches are compositionally biased toward low complexity: residues 258-272 (SDDAAAEAPTTSSAA) and 333-343 (QQQQQQQQQQQ). Basic and acidic residues predominate over residues 440-453 (RREQASHGGGERFN). Residues 475 to 488 (VGEGSASGSGGSGP) show a composition bias toward gly residues.

Belongs to the peptidase M67A family. CSN6 subfamily. As to quaternary structure, component of the COP9 signalosome (CSN) complex.

The protein resides in the cytoplasm. Its subcellular location is the nucleus. Component of the COP9 signalosome (CSN) complex that acts as an regulator of the ubiquitin (Ubl) conjugation pathway by mediating the deneddylation of the cullin subunit of SCF-type E3 ubiquitin-protein ligase complexes. The CSN complex is involved in the regulation of the circadian clock through its control of the stability of the SCF(FWD1) complex. This chain is COP9 signalosome complex subunit 6 (csn-6), found in Neurospora crassa (strain ATCC 24698 / 74-OR23-1A / CBS 708.71 / DSM 1257 / FGSC 987).